Here is a 445-residue protein sequence, read N- to C-terminus: GTPase Der (445 aa).

2 consecutive EngA-type G domains span residues 3–167 and 180–353; these read PVIA…NLPD and IKLA…ASAN. GTP contacts are provided by residues 9-16, 56-60, 119-122, 186-193, 233-237, and 298-301; these read GRPNVGKS, DTGGF, NKAE, DTAGL, and NKWD. Positions 354-438 constitute a KH-like domain; it reads RKMSTPVLTR…PLRIQLKSSV (85 aa).

The protein belongs to the TRAFAC class TrmE-Era-EngA-EngB-Septin-like GTPase superfamily. EngA (Der) GTPase family. As to quaternary structure, associates with the 50S ribosomal subunit.

GTPase that plays an essential role in the late steps of ribosome biogenesis. The protein is GTPase Der of Polaromonas naphthalenivorans (strain CJ2).